Consider the following 136-residue polypeptide: ATP synthase epsilon chain (136 aa).

The disordered stretch occupies residues 104–136 (AGMEGQPASPEKVKAQQQLNEARARMQASKSAD).

It belongs to the ATPase epsilon chain family. As to quaternary structure, F-type ATPases have 2 components, CF(1) - the catalytic core - and CF(0) - the membrane proton channel. CF(1) has five subunits: alpha(3), beta(3), gamma(1), delta(1), epsilon(1). CF(0) has three main subunits: a, b and c.

The protein localises to the cellular thylakoid membrane. Its function is as follows. Produces ATP from ADP in the presence of a proton gradient across the membrane. This chain is ATP synthase epsilon chain, found in Synechococcus sp. (strain CC9902).